A 449-amino-acid chain; its full sequence is tRNA (guanine(37)-N(1))-methyltransferase (449 aa).

Residues H216, 254–255, 282–283, and N345 each bind S-adenosyl-L-methionine; these read DL and DG.

The protein belongs to the class I-like SAM-binding methyltransferase superfamily. TRM5/TYW2 family. In terms of assembly, monomer.

The protein localises to the mitochondrion matrix. Its subcellular location is the nucleus. The protein resides in the cytoplasm. It carries out the reaction guanosine(37) in tRNA + S-adenosyl-L-methionine = N(1)-methylguanosine(37) in tRNA + S-adenosyl-L-homocysteine + H(+). Specifically methylates the N1 position of guanosine-37 in various cytoplasmic and mitochondrial tRNAs. Methylation is not dependent on the nature of the nucleoside 5' of the target nucleoside. This is the first step in the biosynthesis of wybutosine (yW), a modified base adjacent to the anticodon of tRNAs and required for accurate decoding. The polypeptide is tRNA (guanine(37)-N(1))-methyltransferase (Candida albicans (strain SC5314 / ATCC MYA-2876) (Yeast)).